A 207-amino-acid polypeptide reads, in one-letter code: Ras-related protein Rab-5B (207 aa).

Residue Gly-2 is the site of N-myristoyl glycine attachment. Residues 41–49 (GDSGVGKSS), 60–66 (SEKHQVT), 90–94 (DTGGQ), 148–151 (NKKD), and 176–178 (SAK) contribute to the GTP site. The short motif at 63-71 (HQVTIGAAF) is the Effector region element.

This sequence belongs to the small GTPase superfamily. Rab family. In terms of assembly, interacts with CK1. May interact with ARF1. Myristoylation is required for cell membrane and food vacuole membrane localization. Post-translationally, may be palmitoylated on Cys-3. In terms of processing, lacks the C-terminal cysteine motifs subject to isoprenylation present in mammalian RAB5B homolog.

The protein resides in the cell membrane. Its subcellular location is the vacuole membrane. It is found in the vesicle. It carries out the reaction GTP + H2O = GDP + phosphate + H(+). Its activity is regulated as follows. Alternates between an inactive GDP-bound form and an active GTP-bound form. Activated by guanine nucleotide-exchange factors (GEFs) and inactivated by GTPase-activating proteins (GAPs). In terms of biological role, small GTPase which regulates vesicle trafficking between organelles. May be involved in the trafficking of the N-myristoylated AK2 from the endoplasmic reticulum to the parasitophorous vacuole membrane. The protein is Ras-related protein Rab-5B of Plasmodium falciparum (isolate 3D7).